The sequence spans 652 residues: Engulfment and cell motility protein 3 (652 aa).

The region spanning 307 to 479 (EQREQLQALR…VVREQLARTL (173 aa)) is the ELMO domain.

In terms of assembly, probably interacts directly with the SH3-domain of DOCK1 via its SH3-binding site. Part of a complex with DOCK1 and RAC1. Interacts with ADGRB3.

The protein localises to the cytoplasm. Functionally, involved in cytoskeletal rearrangements required for phagocytosis of apoptotic cells and cell motility. Acts in association with DOCK1 and CRK. Was initially proposed to be required in complex with DOCK1 to activate Rac Rho small GTPases. May enhance the guanine nucleotide exchange factor (GEF) activity of DOCK1. This is Engulfment and cell motility protein 3 (ELMO3) from Bos taurus (Bovine).